A 67-amino-acid polypeptide reads, in one-letter code: Conotoxin reg3.8 (67 aa).

The N-terminal stretch at 1 to 22 (MMSKLGVLLTICLLLFPLSVLP) is a signal peptide. Residues 23–50 (LDGDQLADQPARHAQSAERNARFHPVKR) constitute a propeptide that is removed on maturation. 3 disulfides stabilise this stretch: C51/C65, C52/C63, and C57/C66. Residue C66 is modified to Cysteine amide.

This sequence belongs to the conotoxin M superfamily. Expressed by the venom duct.

The protein localises to the secreted. This Conus regius (Crown cone) protein is Conotoxin reg3.8.